The sequence spans 608 residues: Chaperone protein HtpG (608 aa).

Residues 1 to 332 (MQFQTEVNQL…VEDLPLNVSR (332 aa)) are a; substrate-binding. The interval 333–536 (EILQENQILK…KNKPDFAMQQ (204 aa)) is b. Positions 537-608 (LLKQMGQEQN…LTKIINKAFS (72 aa)) are c.

This sequence belongs to the heat shock protein 90 family. In terms of assembly, homodimer.

Its subcellular location is the cytoplasm. Molecular chaperone. Has ATPase activity. The chain is Chaperone protein HtpG from Campylobacter jejuni subsp. jejuni serotype O:23/36 (strain 81-176).